Reading from the N-terminus, the 61-residue chain is Alpha-conotoxin PnIB (61 aa).

The first 21 residues, 1–21, serve as a signal peptide directing secretion; it reads MGMRMMFTVFLLVVLATTVVS. Positions 22-44 are excised as a propeptide; sequence FTSDRASDDGNAAASDLIALTIK. Intrachain disulfides connect Cys46-Cys52 and Cys47-Cys60. The interval 48–50 is ser-Xaa-Pro motif, crucial for potent interaction with nAChR; it reads SLP. At Tyr59 the chain carries Sulfotyrosine. Cys60 carries the cysteine amide modification.

The protein belongs to the conotoxin A superfamily. In terms of tissue distribution, expressed by the venom duct.

Its subcellular location is the secreted. Its function is as follows. Alpha-conotoxins act on postsynaptic membranes, they bind to the nicotinic acetylcholine receptors (nAChR) and thus inhibit them. This toxin blocks mammalian nAChRs (alpha-7/CHRNA7 &gt; alpha-3-beta-2/CHRNA3-CHRNB2). The polypeptide is Alpha-conotoxin PnIB (Conus pennaceus (Feathered cone)).